A 412-amino-acid polypeptide reads, in one-letter code: Argininosuccinate synthase (412 aa).

10–18 (AYSGGLDTS) contacts ATP. An L-citrulline-binding site is contributed by Y89. ATP is bound at residue G119. L-aspartate is bound by residues T121, N125, and D126. N125 contributes to the L-citrulline binding site. Positions 129, 177, 261, and 273 each coordinate L-citrulline.

The protein belongs to the argininosuccinate synthase family. Type 1 subfamily. As to quaternary structure, homotetramer.

It is found in the cytoplasm. It catalyses the reaction L-citrulline + L-aspartate + ATP = 2-(N(omega)-L-arginino)succinate + AMP + diphosphate + H(+). It participates in amino-acid biosynthesis; L-arginine biosynthesis; L-arginine from L-ornithine and carbamoyl phosphate: step 2/3. The chain is Argininosuccinate synthase from Bifidobacterium longum subsp. infantis (strain ATCC 15697 / DSM 20088 / JCM 1222 / NCTC 11817 / S12).